We begin with the raw amino-acid sequence, 213 residues long: ATP-dependent dethiobiotin synthetase BioD (213 aa).

Glu12–Tyr17 is a binding site for ATP. Thr16 provides a ligand contact to Mg(2+). Residue Lys37 is part of the active site. ATP-binding positions include Asp46, Glu107–Gly110, and Asn167–Asn168. The Mg(2+) site is built by Asp46 and Glu107.

This sequence belongs to the dethiobiotin synthetase family. Homodimer. The cofactor is Mg(2+).

The protein resides in the cytoplasm. The enzyme catalyses (7R,8S)-7,8-diammoniononanoate + CO2 + ATP = (4R,5S)-dethiobiotin + ADP + phosphate + 3 H(+). The protein operates within cofactor biosynthesis; biotin biosynthesis; biotin from 7,8-diaminononanoate: step 1/2. Its function is as follows. Catalyzes a mechanistically unusual reaction, the ATP-dependent insertion of CO2 between the N7 and N8 nitrogen atoms of 7,8-diaminopelargonic acid (DAPA, also called 7,8-diammoniononanoate) to form a ureido ring. The protein is ATP-dependent dethiobiotin synthetase BioD of Akkermansia muciniphila (strain ATCC BAA-835 / DSM 22959 / JCM 33894 / BCRC 81048 / CCUG 64013 / CIP 107961 / Muc).